The following is a 37-amino-acid chain: Large ribosomal subunit protein bL36c (37 aa).

This sequence belongs to the bacterial ribosomal protein bL36 family.

It is found in the plastid. The protein localises to the chloroplast. This Angiopteris evecta (Mule's foot fern) protein is Large ribosomal subunit protein bL36c.